The chain runs to 832 residues: Regulator of drug sensitivity 1 (832 aa).

Residues 15–42 (CLQCKKIKRKCDKLRPACSRCQQNSLQC) constitute a DNA-binding region (zn(2)-C6 fungal-type).

It localises to the nucleus. In terms of biological role, zinc cluster transcription factor involved in resistance to cycloheximide. The protein is Regulator of drug sensitivity 1 (RDS1) of Saccharomyces cerevisiae (strain ATCC 204508 / S288c) (Baker's yeast).